The sequence spans 225 residues: Uracil-DNA glycosylase (225 aa).

The active-site Proton acceptor is Asp65.

It belongs to the uracil-DNA glycosylase (UDG) superfamily. UNG family.

It is found in the cytoplasm. The catalysed reaction is Hydrolyzes single-stranded DNA or mismatched double-stranded DNA and polynucleotides, releasing free uracil.. Its function is as follows. Excises uracil residues from the DNA which can arise as a result of misincorporation of dUMP residues by DNA polymerase or due to deamination of cytosine. The protein is Uracil-DNA glycosylase of Bacillus mycoides (strain KBAB4) (Bacillus weihenstephanensis).